A 375-amino-acid polypeptide reads, in one-letter code: tRNA-specific 2-thiouridylase MnmA (375 aa).

ATP is bound by residues 18-25 (GMSGGVDS) and M44. Residues 104–106 (NPD) are interaction with target base in tRNA. C109 functions as the Nucleophile in the catalytic mechanism. Residues C109 and C206 are joined by a disulfide bond. ATP is bound at residue G134. The segment at 156–158 (KDQ) is interaction with tRNA. C206 functions as the Cysteine persulfide intermediate in the catalytic mechanism. The interaction with tRNA stretch occupies residues 318–319 (RY).

Belongs to the MnmA/TRMU family.

The protein localises to the cytoplasm. The catalysed reaction is S-sulfanyl-L-cysteinyl-[protein] + uridine(34) in tRNA + AH2 + ATP = 2-thiouridine(34) in tRNA + L-cysteinyl-[protein] + A + AMP + diphosphate + H(+). Catalyzes the 2-thiolation of uridine at the wobble position (U34) of tRNA, leading to the formation of s(2)U34. The sequence is that of tRNA-specific 2-thiouridylase MnmA from Colwellia psychrerythraea (strain 34H / ATCC BAA-681) (Vibrio psychroerythus).